The following is a 397-amino-acid chain: MSPLRKTVPEFLAHLKSLPISKIASNDVLTICVGNESADMDSIASAITYSYCQYIYNEGTYSEEKKKGSFIVPIIDIPREDLSLRRDVMYVLEKLKIKEEELFFIEDLKSLKQNVSQGTELNSYLVDNNDTPKNLKNYIDNVVGIIDHHFDLQKHLDAEPRIVKVSGSCSSLVFNYWYEKLQGDREVVMNIAPLLMGAILIDTSNMRRKVEESDKLAIERCQAVLSGAVNEVSAQGLEDSSEFYKEIKSRKNDIKGFSVSDILKKDYKQFNFQGKGHKGLEIGLSSIVKRMSWLFNEHGGEADFVNQCRRFQAERGLDVLVLLTSWRKAGDSHRELVILGDSNVVRELIERVSDKLQLQLFGGNLDGGVAMFKQLNVEATRKQVVPYLEEAYSNLEE.

D41, D127, and H148 together coordinate Mg(2+). Residues D41, D127, and H148 each contribute to the Mn(2+) site. Residues H149, S286, and R381 each coordinate ATP.

This sequence belongs to the PPase class C family. It depends on Mn(2+) as a cofactor. Mg(2+) serves as cofactor.

It carries out the reaction [phosphate](n) + H2O = [phosphate](n-1) + phosphate + H(+). In terms of biological role, polyphosphatase (polyPase) involved in the degradation of inorganic polyphosphates (polyP) that is able to degrade a range of chains from three to several hundreds of residues in a highly processive manner. Exclusively shows exopolyphosphatase activity, cleaving inside the polyP chain. This chain is Polyphosphatase, found in Saccharomyces cerevisiae (strain ATCC 204508 / S288c) (Baker's yeast).